Reading from the N-terminus, the 348-residue chain is UPF0324 membrane protein BH02290 (348 aa).

Helical transmembrane passes span 13-35 (AFLNDFSPGILACLIISVLAYGL), 45-67 (QAWLESLVLAILLGSITGSCFTL), 74-96 (GITFCAKTLLEIAIVLLGASISV), 106-128 (LLASIIFVIFVTLILSFTIGRLF), 135-157 (AMLVACGNAICGNSAIVAVAPVI), 167-189 (SIAFTALLGVLIILFLPFLHPFL), 196-218 (YGVLSGMVVYAVPQVLAATASVS), 223-245 (QIATVVKLVRVLMLGPLIFALSI), 257-275 (LHTLVPWFIIGFIFMMLIR), 285-307 (LIPIRFIAQLFTVISMAALGLGV), and 319-341 (VILASTCSILILGVCSLIMIQLN).

Belongs to the UPF0324 family.

The protein localises to the cell membrane. In Bartonella henselae (strain ATCC 49882 / DSM 28221 / CCUG 30454 / Houston 1) (Rochalimaea henselae), this protein is UPF0324 membrane protein BH02290.